The sequence spans 338 residues: Fructose-1,6-bisphosphatase class 1 (338 aa).

Glutamate 92, aspartate 113, leucine 115, and aspartate 116 together coordinate Mg(2+). Substrate is bound by residues 116-119 (DGSS), asparagine 208, and lysine 274. Glutamate 280 is a Mg(2+) binding site.

It belongs to the FBPase class 1 family. Homotetramer. The cofactor is Mg(2+).

It is found in the cytoplasm. The enzyme catalyses beta-D-fructose 1,6-bisphosphate + H2O = beta-D-fructose 6-phosphate + phosphate. It functions in the pathway carbohydrate biosynthesis; gluconeogenesis. This Paramagnetospirillum magneticum (strain ATCC 700264 / AMB-1) (Magnetospirillum magneticum) protein is Fructose-1,6-bisphosphatase class 1.